The chain runs to 262 residues: tRNA pseudouridine synthase A (262 aa).

Aspartate 51 functions as the Nucleophile in the catalytic mechanism. Substrate is bound at residue tyrosine 109.

Belongs to the tRNA pseudouridine synthase TruA family. As to quaternary structure, homodimer.

The enzyme catalyses uridine(38/39/40) in tRNA = pseudouridine(38/39/40) in tRNA. Its function is as follows. Formation of pseudouridine at positions 38, 39 and 40 in the anticodon stem and loop of transfer RNAs. This Dechloromonas aromatica (strain RCB) protein is tRNA pseudouridine synthase A.